The following is a 313-amino-acid chain: MGNEFQHRTVLLDEAVDALVTRPDGVYVDGTFGRGGHSRAVLARLGDAGRLIAFDKDPRAIETAESIEDARFEIVHDSFAAMKGALDARGVGRVSGVLLDLGVSSPQVDDPARGFSFRANGPLDMRMDPTRGESAAEWLARASVQELTEVIRDYGEERFAFQIAKAIVARRAESDRLGPLDSTGELAQIVGHVVKTREKGKDPATRTFQAIRIHVNQELADLQVVLEAALSLLEQGGRLVVISFHSLEDRIVKRFLQAHASAPAVDRRLPIRAADLPSPPLKLLGRMFPNDAEVAANPRARSAVMRIAERVAP.

S-adenosyl-L-methionine is bound by residues 35–37, Asp55, Phe79, Asp100, and Gln107; that span reads GGH.

It belongs to the methyltransferase superfamily. RsmH family.

The protein resides in the cytoplasm. It catalyses the reaction cytidine(1402) in 16S rRNA + S-adenosyl-L-methionine = N(4)-methylcytidine(1402) in 16S rRNA + S-adenosyl-L-homocysteine + H(+). Specifically methylates the N4 position of cytidine in position 1402 (C1402) of 16S rRNA. This chain is Ribosomal RNA small subunit methyltransferase H, found in Burkholderia pseudomallei (strain 1106a).